A 156-amino-acid polypeptide reads, in one-letter code: ATP synthase subunit b (156 aa).

Residues 4-26 form a helical membrane-spanning segment; that stretch reads GATFWGPMISFALFVWFTMKFVW.

It belongs to the ATPase B chain family. As to quaternary structure, F-type ATPases have 2 components, F(1) - the catalytic core - and F(0) - the membrane proton channel. F(1) has five subunits: alpha(3), beta(3), gamma(1), delta(1), epsilon(1). F(0) has three main subunits: a(1), b(2) and c(10-14). The alpha and beta chains form an alternating ring which encloses part of the gamma chain. F(1) is attached to F(0) by a central stalk formed by the gamma and epsilon chains, while a peripheral stalk is formed by the delta and b chains.

Its subcellular location is the cell inner membrane. Functionally, f(1)F(0) ATP synthase produces ATP from ADP in the presence of a proton or sodium gradient. F-type ATPases consist of two structural domains, F(1) containing the extramembraneous catalytic core and F(0) containing the membrane proton channel, linked together by a central stalk and a peripheral stalk. During catalysis, ATP synthesis in the catalytic domain of F(1) is coupled via a rotary mechanism of the central stalk subunits to proton translocation. Component of the F(0) channel, it forms part of the peripheral stalk, linking F(1) to F(0). This chain is ATP synthase subunit b, found in Halorhodospira halophila (strain DSM 244 / SL1) (Ectothiorhodospira halophila (strain DSM 244 / SL1)).